The following is a 90-amino-acid chain: Alpha-latrotoxin associated low molecular weight protein (90 aa).

An N-terminal signal peptide occupies residues 1–18; the sequence is MNKLFFVVFLCLIISVLA.

This sequence belongs to the arthropod CHH/MIH/GIH/VIH hormone family. As to expression, expressed by the venom gland.

The protein resides in the secreted. In terms of biological role, may increase the toxicity of alpha-latrotoxin and/or other venom components. Is non-toxic to mice and to the cockroach Periplaneta americana. The sequence is that of Alpha-latrotoxin associated low molecular weight protein from Latrodectus geometricus (Brown widow spider).